The chain runs to 278 residues: Protein EXORDIUM-like 4 (278 aa).

Positions 1–23 (MAYNYRFAILLVLLSATVGFTAA) are cleaved as a signal peptide. Asn35 carries N-linked (GlcNAc...) asparagine glycosylation.

Belongs to the EXORDIUM family.

The protein localises to the secreted. Its subcellular location is the extracellular space. It is found in the apoplast. In terms of biological role, may play a role in a brassinosteroid-dependent regulation of growth and development. The chain is Protein EXORDIUM-like 4 (EXL4) from Arabidopsis thaliana (Mouse-ear cress).